Reading from the N-terminus, the 392-residue chain is uncharacterized protein (392 aa).

This sequence belongs to the chlamydial CPn_0675/CT_696/TC_0068 family.

This is an uncharacterized protein from Chlamydia trachomatis serovar D (strain ATCC VR-885 / DSM 19411 / UW-3/Cx).